We begin with the raw amino-acid sequence, 621 residues long: Very-long-chain aldehyde decarbonylase GL1-5 (621 aa).

The next 5 helical transmembrane spans lie at 99 to 119, 126 to 146, 186 to 206, 224 to 244, and 332 to 352; these read IILS…GQHL, GAGL…YWFH, LLFS…IIAF, FELV…LMYT, and MWPL…SFTV. Positions 138–272 constitute a Fatty acid hydroxylase domain; that stretch reads VEFLYYWFHR…MPFYDYIYNT (135 aa).

It belongs to the sterol desaturase family. Homodimer. As to expression, expressed in panicles, developing spikelets, stamens and hulls and, at low levels, in roots, developing seeds, flag leaves and seedling shoots. Strongly expressed in the epidermal cells of anthers.

It localises to the endoplasmic reticulum membrane. It carries out the reaction a long-chain fatty aldehyde + 2 NADPH + O2 + H(+) = a long-chain alkane + formate + 2 NADP(+) + H2O. In terms of biological role, aldehyde decarbonylase involved in the conversion of aldehydes to alkanes. Core component of a very-long-chain alkane synthesis complex. Required for the biosynthesis of very-long-chain fatty acids (including polyesters) in cuticles, anther tapetum and pollen exine. The polypeptide is Very-long-chain aldehyde decarbonylase GL1-5 (Oryza sativa subsp. japonica (Rice)).